We begin with the raw amino-acid sequence, 345 residues long: KRR1 small subunit processome component homolog (345 aa).

The KH domain maps to 125 to 193; it reads DIIKIGNLVH…VRDIVLETMN (69 aa). The segment covering 232–245 has biased composition (basic residues); sequence NISKRKQPKVKKQK. 2 disordered regions span residues 232–260 and 273–345; these read NISK…ESKV and QEQK…ARSS. Positions 270-298 form a coiled coil; sequence FLNQEQKQAKRNQERTEKQKEAAKRQDER. Composition is skewed to basic and acidic residues over residues 276-302 and 315-330; these read KQAK…RNKD and RKKE…DVKA. Residues 331–345 are compositionally biased toward basic residues; sequence LKAKLIKANKKARSS.

It belongs to the KRR1 family. As to quaternary structure, monomer. Component of the ribosomal small subunit (SSU) processome.

It localises to the nucleus. The protein resides in the nucleolus. Required for 40S ribosome biogenesis. Involved in nucleolar processing of pre-18S ribosomal RNA and ribosome assembly. Binds to RNA. Required for female germline development, cell viability during eye development and for survival of dividing cells and epithelial cells during early wing disk development. The chain is KRR1 small subunit processome component homolog (dbe) from Drosophila melanogaster (Fruit fly).